The sequence spans 871 residues: Probable inorganic carbon transporter subunit DabA (871 aa).

Zn(2+) is bound by residues Cys-396, Asp-398, His-577, and Cys-592.

Belongs to the inorganic carbon transporter (TC 9.A.2) DabA family. Forms a complex with DabB. The cofactor is Zn(2+).

Its subcellular location is the cell membrane. Part of an energy-coupled inorganic carbon pump. The chain is Probable inorganic carbon transporter subunit DabA from Bacillus subtilis (strain 168).